The chain runs to 151 residues: MVYILGVAVNDDKPVRFALLSFYGIGHAKAEEICAKLSFHNTLRVRELTNVQLTTLSQLLSGMTIEGDLRRQRNADISRLVNIRCYRGMRHVNGLPVNGQNTRTNAKTAKKLNKVPRRGYMTLSPASTRPITWSFCLPRMVSVFQKLKHIH.

Belongs to the universal ribosomal protein uS13 family. As to quaternary structure, component of the mitochondrial small ribosomal subunit (mt-SSU). Mature yeast 74S mitochondrial ribosomes consist of a small (37S) and a large (54S) subunit. The 37S small subunit contains a 15S ribosomal RNA (15S mt-rRNA) and at least 32 different proteins. The 54S large subunit contains a 21S rRNA (21S mt-rRNA) and at least 45 different proteins.

It localises to the mitochondrion. Its function is as follows. Component of the mitochondrial ribosome (mitoribosome), a dedicated translation machinery responsible for the synthesis of mitochondrial genome-encoded proteins, including at least some of the essential transmembrane subunits of the mitochondrial respiratory chain. The mitoribosomes are attached to the mitochondrial inner membrane and translation products are cotranslationally integrated into the membrane. This Schizosaccharomyces pombe (strain 972 / ATCC 24843) (Fission yeast) protein is Small ribosomal subunit protein uS13m (sws2).